A 218-amino-acid polypeptide reads, in one-letter code: N-(5'-phosphoribosyl)anthranilate isomerase (218 aa).

The protein belongs to the TrpF family.

It carries out the reaction N-(5-phospho-beta-D-ribosyl)anthranilate = 1-(2-carboxyphenylamino)-1-deoxy-D-ribulose 5-phosphate. The protein operates within amino-acid biosynthesis; L-tryptophan biosynthesis; L-tryptophan from chorismate: step 3/5. This is N-(5'-phosphoribosyl)anthranilate isomerase from Stenotrophomonas maltophilia (strain K279a).